The chain runs to 162 residues: Tegument protein BLRF2 (162 aa).

Residues 12–43 (VKAVDMSMEDMAARLARLESENKALKQQVLRG) are a coiled coil. Residues 118–162 (SMLGAKGQPSPGEGTRPRESNDPNATRRARSRSRGREAKKVQISD) form a disordered region. Basic and acidic residues predominate over residues 151–162 (RGREAKKVQISD).

It belongs to the herpesviridae BLRF2 family. Homooligomer; homooligomerizes and binds double-stranded DNA (dsDNA) cooperatively. Interacts with host CGAS.

Its subcellular location is the virion tegument. The protein localises to the host cytoplasm. Functionally, plays a role in the inhibition of host innate immune system by targeting the CGAS enzymatic activity which is the principal cytosolic DNA sensor that detects invading viral DNA. Acts by inhibiting CGAS-DNA phase separation: directly binds double-stranded DNA (dsDNA) in a length dependent but sequence independent manner and is able to form DNA-induced phase separation in infected cells. DNA phase separation of ORF52 mediates disruption of liquid-like droplets in which CGAS is activated, thereby preventing CGAS activity. The sequence is that of Tegument protein BLRF2 from Homo sapiens (Human).